The sequence spans 190 residues: Peptidyl-prolyl cis-trans isomerase A (190 aa).

An N-terminal signal peptide occupies residues 1-24 (MLKSTLAAVAAVFALSALSPAALA). The PPIase cyclophilin-type domain occupies 27–188 (GDPHVLLTTS…KPVVILSAKV (162 aa)).

It belongs to the cyclophilin-type PPIase family.

It localises to the periplasm. It catalyses the reaction [protein]-peptidylproline (omega=180) = [protein]-peptidylproline (omega=0). Functionally, PPIases accelerate the folding of proteins. It catalyzes the cis-trans isomerization of proline imidic peptide bonds in oligopeptides. This is Peptidyl-prolyl cis-trans isomerase A (ppiA) from Salmonella typhimurium (strain LT2 / SGSC1412 / ATCC 700720).